We begin with the raw amino-acid sequence, 726 residues long: Ribonuclease R (726 aa).

The region spanning 262–590 (RIDLRHLPFF…LVHRVIKNLL (329 aa)) is the RNB domain. Positions 642–723 (GDVLTGVISN…NERKIELSLY (82 aa)) constitute an S1 motif domain.

This sequence belongs to the RNR ribonuclease family. RNase R subfamily. In terms of assembly, monomer.

Its subcellular location is the cytoplasm. The catalysed reaction is Exonucleolytic cleavage in the 3'- to 5'-direction to yield nucleoside 5'-phosphates.. Functionally, 3'-5' exoribonuclease that releases 5'-nucleoside monophosphates and is involved in maturation of structured RNAs. In Buchnera aphidicola subsp. Schizaphis graminum (strain Sg), this protein is Ribonuclease R.